Here is a 243-residue protein sequence, read N- to C-terminus: Isoprenyl transferase 2 (243 aa).

Asp23 is a catalytic residue. Mg(2+) is bound at residue Asp23. Substrate contacts are provided by residues 24–27, Trp28, Arg36, His40, and 68–70; these read GNGR and STE. Catalysis depends on Asn71, which acts as the Proton acceptor. Substrate-binding positions include Trp72, Arg74, Arg191, and 197–199; that span reads RTS. Residue Glu210 participates in Mg(2+) binding.

Belongs to the UPP synthase family. As to quaternary structure, homodimer. Requires Mg(2+) as cofactor.

Catalyzes the condensation of isopentenyl diphosphate (IPP) with allylic pyrophosphates generating different type of terpenoids. This is Isoprenyl transferase 2 from Corynebacterium glutamicum (strain ATCC 13032 / DSM 20300 / JCM 1318 / BCRC 11384 / CCUG 27702 / LMG 3730 / NBRC 12168 / NCIMB 10025 / NRRL B-2784 / 534).